A 158-amino-acid chain; its full sequence is UPF0262 protein R00612 (158 aa).

It belongs to the UPF0262 family.

The sequence is that of UPF0262 protein R00612 from Rhizobium meliloti (strain 1021) (Ensifer meliloti).